The chain runs to 1409 residues: DNA-directed RNA polymerase subunit beta' (1409 aa).

Positions 70, 72, 85, and 88 each coordinate Zn(2+). The Mg(2+) site is built by D458, D460, and D462. The Zn(2+) site is built by C813, C887, C894, and C897. Residues 1385 to 1403 (EAAELAGSTSDVSTTADAS) show a composition bias toward low complexity. A disordered region spans residues 1385–1409 (EAAELAGSTSDVSTTADASEGAASE).

This sequence belongs to the RNA polymerase beta' chain family. As to quaternary structure, the RNAP catalytic core consists of 2 alpha, 1 beta, 1 beta' and 1 omega subunit. When a sigma factor is associated with the core the holoenzyme is formed, which can initiate transcription. It depends on Mg(2+) as a cofactor. The cofactor is Zn(2+).

The catalysed reaction is RNA(n) + a ribonucleoside 5'-triphosphate = RNA(n+1) + diphosphate. Its function is as follows. DNA-dependent RNA polymerase catalyzes the transcription of DNA into RNA using the four ribonucleoside triphosphates as substrates. In Variovorax paradoxus (strain S110), this protein is DNA-directed RNA polymerase subunit beta'.